Reading from the N-terminus, the 270-residue chain is Shikimate dehydrogenase (NADP(+)) (270 aa).

Shikimate-binding positions include 15-17 (SKS) and threonine 62. Lysine 66 (proton acceptor) is an active-site residue. Residues asparagine 87 and aspartate 102 each contribute to the shikimate site. NADP(+) contacts are provided by residues 127–131 (GAGGA), 151–156 (NRTVAR), and methionine 214. Tyrosine 216 contacts shikimate. An NADP(+)-binding site is contributed by glycine 238.

This sequence belongs to the shikimate dehydrogenase family. In terms of assembly, homodimer.

It carries out the reaction shikimate + NADP(+) = 3-dehydroshikimate + NADPH + H(+). It participates in metabolic intermediate biosynthesis; chorismate biosynthesis; chorismate from D-erythrose 4-phosphate and phosphoenolpyruvate: step 4/7. Its function is as follows. Involved in the biosynthesis of the chorismate, which leads to the biosynthesis of aromatic amino acids. Catalyzes the reversible NADPH linked reduction of 3-dehydroshikimate (DHSA) to yield shikimate (SA). The chain is Shikimate dehydrogenase (NADP(+)) from Alkalilimnicola ehrlichii (strain ATCC BAA-1101 / DSM 17681 / MLHE-1).